Reading from the N-terminus, the 1050-residue chain is MDLGHSLFVVFTCFLMARCRTEIGKNITVVVMLPDNHLKYSFAFPRVFPAIRMAHDDIQKKGKLLRGYTINLLNHSTESQGAGCSESQAQIMAVDTKLYEKPDAFFGPGCVYSVASVGRFVNHWKLPLITAWAPAFGFDSKEEYRTIVRTGLSTTKLGEFAHYLHSHFNWTTRAFMLFHDLKVDDRPYYFISEGVFLVLRRENITVEAVPYDDQKNSDYREMISSLKSNGRIVYICGPLDTFLEFMRIFQNEGLPPEDYAIFYLDMFAKSILDKDYKPWESSDINWTDPIKLFKSVFVITAKEPDNPEYKAFQRELHARAKQEFSVQLEPSLEDIIAGCFYDGFMLYAQALNETLAEGGSQNDGINITQKMQNRRFWGVTGLVSTDKNNDRDIDFNLWAMTNHKTGQYGIVAYYNGTNKEIVWSETEKIQWPKGSPPLDNPPCVFSMDEPFCNEDQLPVLGIVAVGSGLALIIFGISSFLIYRKLKLEKELAGMLWRIRWEELQFESPNKYHKCAGSRLTISQRGSSYGSLITAHGKYQLFAKTGYFKGNLVAIKHVNKKRIELTRQVLFELKHMRDVQFNHLTRFIGACIDPPNICIVTEYCPRGSLQDILENESINLDWMFRYSLINDIVKGMNFLHNSYIGSHGNLKSSNCVVDSRFVLKITDYGLASFRSSCENEDSHALYAKKLWTAPELLIYDRHPPQGTQKGDVYSFGIILQEIALRNGPFYVDGMDLSPKEIVQKVRNGQKPYFRPTTDTSCHSEELSILMEGCWAEDPADRPDFSYIKIFVMKLNKEGSTSILNNLLSRMEQYANNLENLVEERTQAYLEEKRKAENLLYQILPHSVAEQLKRGETVQAEAFDSVTIYFSDIVGFTSMSAESTPLQVVTLLNDLYTCFDAIIDNFDVYKVETIGDAYMVVSDSQSRNGKLHAREIAGMSLALLEQVKTFKIRHRPNDQLRLRIGIHTGPVCAGVVGLKMPRYCLFGDTVNTASRMESNGEALKIHLSSATKEVLDEFGYFDLQLRGDVEMKGKGKMRTYWLLGEKTDVYVI.

Positions Met1 to Cys19 are cleaved as a signal peptide. Residues Arg20–Leu460 lie on the Extracellular side of the membrane. Asn26 and Asn74 each carry an N-linked (GlcNAc...) asparagine glycan. Cys84 and Cys110 are disulfide-bonded. N-linked (GlcNAc...) asparagine glycans are attached at residues Asn169, Asn203, Asn285, Asn352, Asn366, and Asn415. Cys236 and Cys339 are oxidised to a cystine. Residues Gly461–Ile481 traverse the membrane as a helical segment. At Tyr482 to Ile1050 the chain is on the cytoplasmic side. The 274-residue stretch at Ser517–Val790 folds into the Protein kinase domain. Residues Thr865–Glu995 form the Guanylate cyclase domain.

The protein belongs to the adenylyl cyclase class-4/guanylyl cyclase family. Post-translationally, phosphorylated. Phosphorylation of the protein kinase-like domain is required for full activation by CNP. In terms of processing, glycosylated. In terms of tissue distribution, high levels found in liver, atrium and gill. Moderate levels found in brain and ventricle, and low levels in esophageal sphincter, stomach, posterior intestine and kidney.

Its subcellular location is the cell membrane. It carries out the reaction GTP = 3',5'-cyclic GMP + diphosphate. Receptor for the C-type natriuretic peptide NPPC/CNP hormone. Has guanylate cyclase activity upon binding of its ligand. May play a role in the regulation of skeletal growth. In Anguilla japonica (Japanese eel), this protein is Atrial natriuretic peptide receptor 2 (npr2).